A 241-amino-acid chain; its full sequence is Chloride intracellular channel protein 1 (241 aa).

At A2 the chain carries N-acetylalanine. The required for insertion into the membrane stretch occupies residues 2–90 (AEEQPQVELF…EEFLEAVLCP (89 aa)). K13 carries the N6-acetyllysine modification. Positions 24–27 (CPFS) match the G-site motif. An intrachain disulfide couples C24 to C59. A helical membrane pass occupies residues 26 to 46 (FSQRLFMVLWLKGVTFNVTTV). The 141-residue stretch at 93–233 (YPKLAALNPE…PDDEEIELAY (141 aa)) folds into the GST C-terminal domain. K119 is modified (N6-acetyllysine). S121 is modified (phosphoserine). Position 131 is an N6-acetyllysine (K131). S156 carries the phosphoserine modification. Y233 bears the Phosphotyrosine mark.

Belongs to the chloride channel CLIC family. In terms of assembly, monomer. Homodimer (in vitro). Interacts with TRAPPC2. Dimerization requires a conformation change that leads to the exposure of a large hydrophobic surface. In vivo, this may lead to membrane insertion.

The protein localises to the nucleus. It localises to the nucleus membrane. The protein resides in the cytoplasm. It is found in the cell membrane. Its subcellular location is the endoplasmic reticulum. It carries out the reaction L-dehydroascorbate + 2 glutathione = glutathione disulfide + L-ascorbate. It catalyses the reaction chloride(in) = chloride(out). The catalysed reaction is iodide(out) = iodide(in). The enzyme catalyses thiocyanate(in) = thiocyanate(out). It carries out the reaction nitrate(in) = nitrate(out). It catalyses the reaction bromide(in) = bromide(out). The catalysed reaction is fluoride(in) = fluoride(out). In the soluble state, catalyzes glutaredoxin-like thiol disulfide exchange reactions with reduced glutathione as electron donor. Reduces selenite and dehydroascorbate and may act as an antioxidant during oxidative stress response. Can insert into membranes and form voltage-dependent multi-ion conductive channels. Membrane insertion seems to be redox-regulated and may occur only under oxidizing conditions. Involved in regulation of the cell cycle. The protein is Chloride intracellular channel protein 1 (CLIC1) of Bos taurus (Bovine).